The sequence spans 542 residues: MFSLQKKALQHIYMTPENASELSKDLLQHLGLYWNGPIIKMDTVVHLHNKIFSNRSVLKYALAKQANITIIETLVLWVEPEYALAQALKHNRKDVLECIFSYHLTTPKYHHIMHLTSSQELFEFFHLFICKSKNYHARMECLLYAATLYNFQNILEKNREYIIRHSIGNPLFAIACKERHINLIAWFVTAGVLDTYDDSTLFNTAFKLGDYSLLEVACDLPITYPDYLIISMMQTAIQKNYFRFFKKLLTHFSIYRPIIITDAAYYDRRKILLLLLNQNIFNNFTILCALSAAIKGHASKKTLNLLINRLDSQMTVIDSVYYSIIKYNNIDCIPLLMHIKTFRMETLISIAVHGDNIDIIAACKAFLPKDTLYHLVLKMAIILRNHKLFKLYTEKEHPMYIFTILKAIISDFINYTVFQALAIEYLCKFHQEKQLPIVPLLMVLAEHNYITKFKKTCYAANMSDQKVKRALIKCLFIATQKNYCQIFKYCFGSLLKVLSKHEQEKFFNSVVFAKKLASYYDHQNMIQLIDSLIERFRYLLKA.

The protein belongs to the asfivirus MGF 505 family.

Plays a role in virus cell tropism, and may be required for efficient virus replication in macrophages. The chain is Protein MGF 505-11L from African swine fever virus (isolate Tick/Malawi/Lil 20-1/1983) (ASFV).